A 1850-amino-acid chain; its full sequence is Vitellogenin-2 (1850 aa).

Residues 1–15 (MRGIILALVLTLVGS) form the signal peptide. A Vitellogenin domain is found at 24–662 (FNSRRSYLYN…SPRTMFPSAI (639 aa)). Asn-604 carries an N-linked (GlcNAc...) asparagine glycan. Residues 935 to 984 (DAPLDVTEEPFQTSERASREHFAMQGPDSMPRKQSHSSREDLRRSTGKRA) are disordered. An N-linked (GlcNAc...) asparagine glycan is attached at Asn-1094. Disordered stretches follow at residues 1115–1313 (GTEP…SSSS) and 1338–1362 (EFPK…SHDT). The segment covering 1122–1143 (TSSSSSSASSTATSSSSSSASS) has biased composition (low complexity). Over residues 1156–1165 (DQVKQARNKD) the composition is skewed to basic and acidic residues. A compositionally biased stretch (low complexity) spans 1167-1266 (SSSSRSSKSS…SRSSSSSSKS (100 aa)). 2 N-linked (GlcNAc...) asparagine glycosylation sites follow: Asn-1177 and Asn-1188. Residues 1267-1277 (SSHHSHSHHSG) show a composition bias toward basic residues. Positions 1278 to 1291 (HLNGSSSSSSSSRS) are enriched in low complexity. An N-linked (GlcNAc...) asparagine glycan is attached at Asn-1280. Positions 1338–1350 (EFPKRKLPGDRAT) are enriched in basic and acidic residues. Asn-1417, Asn-1597, and Asn-1665 each carry an N-linked (GlcNAc...) asparagine glycan. Positions 1579–1756 (ARCSVSYNKI…SWILEEAPCR (178 aa)) constitute a VWFD domain. 2 cysteine pairs are disulfide-bonded: Cys-1581–Cys-1719 and Cys-1604–Cys-1755.

Post-translationally, phosvitin, an egg yolk storage protein, is one of the most highly phosphorylated (10%) proteins in nature. Cathepsin D is responsible for intraoocytic processing of vitellogenin. In terms of processing, may contain intrachain disulfide bonds. As to expression, after incorporation from serum via a specific receptor, it is cleaved into four fragments, heavy and light chain lipovitellins, phosphovitin and YGP40, and YGP40 is released into the yolk plasma before or during compartmentation of lipovitellin-phosvitin complex into the yolk granule.

In terms of biological role, precursor of the major egg-yolk proteins that are sources of nutrients during early development of oviparous organisms. Functionally, phosvitin is believed to be of importance in sequestering calcium, iron and other cations for the developing embryo. The polypeptide is Vitellogenin-2 (VTG2) (Gallus gallus (Chicken)).